We begin with the raw amino-acid sequence, 390 residues long: Probable inactive secreted aspartyl protease (390 aa).

A signal peptide spans 1–20; sequence MQLTIKALVGILTTISAATA. Positions 21 to 69 are cleaved as a propeptide — removed in mature form; the sequence is VSFDMENLGAEKRGVSGEELHMLHGNEVLARFANGVYPEVANGTRVSKR. An N-linked (GlcNAc...) asparagine glycan is attached at Asn62. Residues 86–388 enclose the Peptidase A1 domain; that stretch reads WAVKAKIGSN…KFDSNEMQIA (303 aa). Catalysis depends on residues Asp104 and Asp273. Cysteines 313 and 346 form a disulfide.

It belongs to the peptidase A1 family.

It is found in the secreted. Functionally, probable inactive secreted aspartyl protease. May promote an inflammatory immune response in the host when the host skin barrier is breached. Has no detectable protease activity in vitro on fluorogenic substrates, a peptide library, or with the general protease substrate casein. The presence of the enzyme also does not affect the activity of the secreted aspartyl protease SAP1. The protein is Probable inactive secreted aspartyl protease of Malassezia globosa (strain ATCC MYA-4612 / CBS 7966) (Dandruff-associated fungus).